A 177-amino-acid chain; its full sequence is Glia associated membrane protein glam-1 (177 aa).

A run of 3 helical transmembrane segments spans residues 19 to 39, 42 to 62, and 76 to 96; these read PLVV…FWMS, FGMA…LFGA, and VTFA…VVFA.

Its subcellular location is the membrane. This is Glia associated membrane protein glam-1 from Caenorhabditis elegans.